The sequence spans 456 residues: MAASASTAAGEEDWVLPSEVEVLESIYLDELQVMKGNGRSPWEIFITLHPATAEVQDSQFVCFTLVLRIPVQYPHEVPQISIRNPRGLSDEQIHKISQALGHVAKEGLGTAMLYELIEKGKEILTDNNIPHGQCVICLYGFQEKEAFTKTPCYHYFHCHCLARYIQHMEQELTTQEQEQERQHVVTKQKAVGVQCPVCREPLVYDLASLKAAPEPQQPMELYQPSAESLRQQEELKLLYQRQQEKGGIIDLEAERNRYFISLQQPPAALEPESAVDVSREPQPPNALSAEQSTSLADQSTLPTSLPMTTQYTYEKTSGAGPNQQRPGETQKSVLDPPRHGRGSWRQYDRRHPKGGECCTPKGTSEIHELPPPEKPLKETVDLKAEPRNKGLTGHPQEKGPGSWQGPSARRTRDCARWERSKNRTPGSCYPHLPRGQGAYRSGTRREPLGLESEEGS.

The RWD domain occupies 18–127 (SEVEVLESIY…EKGKEILTDN (110 aa)). Zn(2+) is bound by residues cysteine 134, cysteine 137, cysteine 152, histidine 154, histidine 157, cysteine 160, cysteine 195, and cysteine 198. Residues 134 to 199 (CVICLYGFQE…AVGVQCPVCR (66 aa)) form an RING-type zinc finger. Residues 269 to 456 (LEPESAVDVS…PLGLESEEGS (188 aa)) form a disordered region. Positions 288–332 (SAEQSTSLADQSTLPTSLPMTTQYTYEKTSGAGPNQQRPGETQKS) are enriched in polar residues. 2 stretches are compositionally biased toward basic and acidic residues: residues 364–388 (SEIHELPPPEKPLKETVDLKAEPRN) and 410–421 (RTRDCARWERSK).

The protein belongs to the RNF25 family. In terms of assembly, interacts with UBE2D2, and may also interact with UBE2E1 and UBE2E3. Interacts with RELA/p65. In terms of processing, ubiquitinated; autoubiquitinated. As to expression, ubiquitous.

Its subcellular location is the cytoplasm. The enzyme catalyses S-ubiquitinyl-[E2 ubiquitin-conjugating enzyme]-L-cysteine + [acceptor protein]-L-lysine = [E2 ubiquitin-conjugating enzyme]-L-cysteine + N(6)-ubiquitinyl-[acceptor protein]-L-lysine.. Its pathway is protein modification; protein ubiquitination. Its function is as follows. E3 ubiquitin-protein ligase that plays a key role in the RNF14-RNF25 translation quality control pathway, a pathway that takes place when a ribosome has stalled during translation, and which promotes ubiquitination and degradation of translation factors on stalled ribosomes. Catalyzes ubiquitination of RPS27A in response to ribosome collisions, promoting activation of RNF14. RNF25 catalyzes ubiquitination of other ribosomal proteins on stalled ribosomes, such as RPL0, RPL1, RPL12, RPS13 and RPS17. Also involved in ubiquitination and degradation of stalled ETF1/eRF1. Independently of its function in the response to stalled ribosomes, mediates ubiquitination and subsequent proteasomal degradation of NKD2. May also stimulate transcription mediated by NF-kappa-B via its interaction with RELA/p65. The polypeptide is E3 ubiquitin-protein ligase RNF25 (Mus musculus (Mouse)).